The following is a 394-amino-acid chain: Phosphorylated adapter RNA export protein (394 aa).

Residues 1–18 are compositionally biased toward acidic residues; the sequence is MALEVGDMEDGQLSDSDS. The disordered stretch occupies residues 1–33; that stretch reads MALEVGDMEDGQLSDSDSDMTVAPSDRPLQLPK. At Ala-2 the chain carries N-acetylalanine. The tract at residues 2-329 is necessary for interaction with CBP80; the sequence is ALEVGDMEDG…KAARKRRTQV (328 aa). Ser-14, Ser-16, Ser-65, Ser-66, Ser-69, and Ser-73 each carry phosphoserine. Residues 81 to 84 carry the Nuclear localization signal motif; sequence KRKR. The interval 83–111 is disordered; it reads KRQKCFNPPPKPEPFQFGQSSQKPPVAGG. The short motif at 130–139 is the Nuclear export signal element; the sequence is VATELGILGM. Over residues 183-193 the composition is skewed to basic and acidic residues; it reads KKMGSKEEENG. The disordered stretch occupies residues 183-211; that stretch reads KKMGSKEEENGQGHLKRKRPVKDRLGNRP. Positions 198–201 match the Nuclear localization signal motif; the sequence is KRKR. The residue at position 226 (Ser-226) is a Phosphoserine. A sufficient for poly U RNA-binding region spans residues 228 to 328; that stretch reads EKVADEISFR…KKAARKRRTQ (101 aa). The necessary for poly U RNA-binding and snRNA export stretch occupies residues 279–287; it reads GSRRRTPGG. Residue Thr-296 is modified to Phosphothreonine. A phosphoserine mark is found at Ser-356 and Ser-368.

The protein belongs to the PHAX family. As to quaternary structure, found in a U snRNA export complex with PHAX/RNUXA, NCBP1/CBP80, NCBP2/CBP20, RAN, XPO1 and m7G-capped RNA. Part of a precomplex with PHAX/RNUXA, NCBP1/CBP80, NCBP2/CBP20 and m7G-capped RNA. Interacts with NCBP1/CBP80. Found in a complex with snoRNA. Interacts with NCBP2/CBP20. Interacts with DDX39A; this interaction stimulates PHAX RNA binding activity. Post-translationally, phosphorylated in the nucleus. Dephosphorylated in the cytoplasm.

It localises to the nucleus. It is found in the nucleoplasm. The protein resides in the cajal body. The protein localises to the cytoplasm. Its function is as follows. A phosphoprotein adapter involved in the XPO1-mediated U snRNA export from the nucleus. Bridge components required for U snRNA export, the cap binding complex (CBC)-bound snRNA on the one hand and the GTPase Ran in its active GTP-bound form together with the export receptor XPO1 on the other. Its phosphorylation in the nucleus is required for U snRNA export complex assembly and export, while its dephosphorylation in the cytoplasm causes export complex disassembly. It is recycled back to the nucleus via the importin alpha/beta heterodimeric import receptor. The directionality of nuclear export is thought to be conferred by an asymmetric distribution of the GTP- and GDP-bound forms of Ran between the cytoplasm and nucleus. Its compartmentalized phosphorylation cycle may also contribute to the directionality of export. Binds strongly to m7G-capped U1 and U5 small nuclear RNAs (snRNAs) in a sequence-unspecific manner and phosphorylation-independent manner. Also plays a role in the biogenesis of U3 small nucleolar RNA (snoRNA). Involved in the U3 snoRNA transport from nucleoplasm to Cajal bodies. Binds strongly to m7G-capped U3, U8 and U13 precursor snoRNAs and weakly to trimethylated (TMG)-capped U3, U8 and U13 snoRNAs. Also binds to telomerase RNA. This is Phosphorylated adapter RNA export protein (PHAX) from Homo sapiens (Human).